Consider the following 466-residue polypeptide: Probable Xaa-Pro aminopeptidase pepP (466 aa).

4 residues coordinate Mn(2+): Asp264, Asp275, Glu398, and Glu438.

This sequence belongs to the peptidase M24B family. The cofactor is Mn(2+).

It carries out the reaction Release of any N-terminal amino acid, including proline, that is linked to proline, even from a dipeptide or tripeptide.. Functionally, catalyzes the removal of a penultimate prolyl residue from the N-termini of peptides. This Aspergillus niger (strain ATCC MYA-4892 / CBS 513.88 / FGSC A1513) protein is Probable Xaa-Pro aminopeptidase pepP (pepP).